A 274-amino-acid chain; its full sequence is Hydroxyethylthiazole kinase (274 aa).

Residue Met-50 coordinates substrate. Positions 126 and 171 each coordinate ATP. Ala-200 contributes to the substrate binding site.

Belongs to the Thz kinase family. The cofactor is Mg(2+).

It carries out the reaction 5-(2-hydroxyethyl)-4-methylthiazole + ATP = 4-methyl-5-(2-phosphooxyethyl)-thiazole + ADP + H(+). It functions in the pathway cofactor biosynthesis; thiamine diphosphate biosynthesis; 4-methyl-5-(2-phosphoethyl)-thiazole from 5-(2-hydroxyethyl)-4-methylthiazole: step 1/1. Catalyzes the phosphorylation of the hydroxyl group of 4-methyl-5-beta-hydroxyethylthiazole (THZ). This Acinetobacter baylyi (strain ATCC 33305 / BD413 / ADP1) protein is Hydroxyethylthiazole kinase.